Reading from the N-terminus, the 378-residue chain is Putative zinc finger protein 302L (378 aa).

Residues 3 to 25 form a C2H2-type; degenerate zinc finger; sequence IVCEFCDKSFDSKSKVNAHQRTK.

Belongs to the IIV-6 302L family.

The sequence is that of Putative zinc finger protein 302L from Invertebrate iridescent virus 6 (IIV-6).